The chain runs to 201 residues: Adenylyl-sulfate kinase (201 aa).

35 to 42 (GLSGSGKS) serves as a coordination point for ATP. Serine 109 acts as the Phosphoserine intermediate in catalysis.

It belongs to the APS kinase family.

The catalysed reaction is adenosine 5'-phosphosulfate + ATP = 3'-phosphoadenylyl sulfate + ADP + H(+). The protein operates within sulfur metabolism; hydrogen sulfide biosynthesis; sulfite from sulfate: step 2/3. In terms of biological role, catalyzes the synthesis of activated sulfate. This chain is Adenylyl-sulfate kinase, found in Shigella flexneri.